The following is a 1034-amino-acid chain: FERM domain-containing protein 4B (1034 aa).

The FERM domain occupies Arg-59–Lys-361. Ser-372 carries the phosphoserine modification. 2 coiled-coil regions span residues Glu-417 to Lys-450 and Lys-531 to Lys-561. Residues Met-542–Tyr-971 are necessary for adherens junction and tight junction localization. A compositionally biased stretch (low complexity) spans Pro-576–Asp-589. Disordered stretches follow at residues Pro-576 to Pro-614, Asp-635 to Gln-698, Phe-712 to Gln-735, and Thr-752 to Asp-786. Position 608 is a phosphoserine (Ser-608). Polar residues-rich tracts occupy residues Asp-635–Tyr-650 and Met-663–Tyr-674. Residues Ser-675–Ser-685 are compositionally biased toward low complexity. The residue at position 697 (Ser-697) is a Phosphoserine. A compositionally biased stretch (low complexity) spans Ser-713–Ser-722. Over residues Gln-769–Asn-781 the composition is skewed to polar residues. A Glycyl lysine isopeptide (Lys-Gly) (interchain with G-Cter in SUMO2) cross-link involves residue Lys-882. Disordered stretches follow at residues Arg-905–Gly-925 and Asp-1004–Val-1034. Positions Ala-906–Phe-920 are enriched in polar residues. Position 915 is a phosphoserine (Ser-915). Over residues Ser-1018–Val-1034 the composition is skewed to basic and acidic residues. A Glycyl lysine isopeptide (Lys-Gly) (interchain with G-Cter in SUMO2) cross-link involves residue Lys-1029.

In terms of assembly, interacts with CYTH3. Interacts with PARD3. Interacts with CYTH1.

The protein resides in the cytoplasm. It is found in the cytoskeleton. Its subcellular location is the cell junction. The protein localises to the tight junction. It localises to the adherens junction. Functionally, member of GRP1 signaling complexes that are acutely recruited to plasma membrane ruffles in response to insulin receptor signaling. May function as a scaffolding protein that regulates epithelial cell polarity by connecting ARF6 activation with the PAR3 complex. Plays a redundant role with FRMD4A in epithelial polarization. This Homo sapiens (Human) protein is FERM domain-containing protein 4B.